The following is a 399-amino-acid chain: Elongation factor Tu (399 aa).

One can recognise a tr-type G domain in the interval 10 to 209 (KPHVNIGTIG…EVDAYIPTPV (200 aa)). A G1 region spans residues 19 to 26 (GHVDHGKT). 19–26 (GHVDHGKT) is a GTP binding site. T26 lines the Mg(2+) pocket. The interval 60–64 (GITIA) is G2. The G3 stretch occupies residues 81 to 84 (DCPG). GTP-binding positions include 81–85 (DCPGH) and 136–139 (NKQD). A G4 region spans residues 136–139 (NKQD). The segment at 174–176 (SAL) is G5.

This sequence belongs to the TRAFAC class translation factor GTPase superfamily. Classic translation factor GTPase family. EF-Tu/EF-1A subfamily. In terms of assembly, monomer.

It is found in the cytoplasm. It carries out the reaction GTP + H2O = GDP + phosphate + H(+). Functionally, GTP hydrolase that promotes the GTP-dependent binding of aminoacyl-tRNA to the A-site of ribosomes during protein biosynthesis. The polypeptide is Elongation factor Tu (Helicobacter acinonychis (strain Sheeba)).